Reading from the N-terminus, the 159-residue chain is Putative viral CXC chemokine 2 (159 aa).

2 disulfide bridges follow: Cys-50–Cys-77 and Cys-52–Cys-93.

It belongs to the intercrine alpha (chemokine CxC) family.

The polypeptide is Putative viral CXC chemokine 2 (UL147) (Human cytomegalovirus (strain Towne) (HHV-5)).